The following is a 197-amino-acid chain: Xanthine phosphoribosyltransferase (197 aa).

The xanthine site is built by Leu20 and Asn27. 128–132 provides a ligand contact to 5-phospho-alpha-D-ribose 1-diphosphate; the sequence is ANGQA. Lys156 serves as a coordination point for xanthine.

This sequence belongs to the purine/pyrimidine phosphoribosyltransferase family. Xpt subfamily. Homodimer.

The protein resides in the cytoplasm. The catalysed reaction is XMP + diphosphate = xanthine + 5-phospho-alpha-D-ribose 1-diphosphate. Its pathway is purine metabolism; XMP biosynthesis via salvage pathway; XMP from xanthine: step 1/1. Its function is as follows. Converts the preformed base xanthine, a product of nucleic acid breakdown, to xanthosine 5'-monophosphate (XMP), so it can be reused for RNA or DNA synthesis. This is Xanthine phosphoribosyltransferase from Bacillus anthracis (strain A0248).